The primary structure comprises 132 residues: Protein LEKR1 (132 aa).

The stretch at 37–116 (FKAMEEKVKA…KKQLSHLQDE (80 aa)) forms a coiled coil.

This Homo sapiens (Human) protein is Protein LEKR1 (LEKR1).